Here is a 478-residue protein sequence, read N- to C-terminus: Glycogen synthase (478 aa).

Lysine 15 is an ADP-alpha-D-glucose binding site.

It belongs to the glycosyltransferase 1 family. Bacterial/plant glycogen synthase subfamily.

It catalyses the reaction [(1-&gt;4)-alpha-D-glucosyl](n) + ADP-alpha-D-glucose = [(1-&gt;4)-alpha-D-glucosyl](n+1) + ADP + H(+). It participates in glycan biosynthesis; glycogen biosynthesis. Its function is as follows. Synthesizes alpha-1,4-glucan chains using ADP-glucose. This Caldicellulosiruptor bescii (strain ATCC BAA-1888 / DSM 6725 / KCTC 15123 / Z-1320) (Anaerocellum thermophilum) protein is Glycogen synthase.